The sequence spans 163 residues: Ribosome maturation factor RimP (163 aa).

The protein belongs to the RimP family.

The protein resides in the cytoplasm. In terms of biological role, required for maturation of 30S ribosomal subunits. The polypeptide is Ribosome maturation factor RimP (Polynucleobacter necessarius subsp. necessarius (strain STIR1)).